Reading from the N-terminus, the 329-residue chain is Replication factor C small subunit (329 aa).

Residue 51–58 (GPPGTGKT) coordinates ATP.

It belongs to the activator 1 small subunits family. RfcS subfamily. In terms of assembly, heteromultimer composed of small subunits (RfcS) and large subunits (RfcL).

Functionally, part of the RFC clamp loader complex which loads the PCNA sliding clamp onto DNA. This Staphylothermus marinus (strain ATCC 43588 / DSM 3639 / JCM 9404 / F1) protein is Replication factor C small subunit.